The primary structure comprises 149 residues: Calmodulin (149 aa).

A2 carries the N-acetylalanine modification. EF-hand domains lie at E8–N43, P44–D79, D81–K116, and L117–K149. 14 residues coordinate Ca(2+): D21, D23, D25, T27, E32, D57, D59, N61, T63, E68, D94, D96, N98, and E105. K116 is modified (N6,N6,N6-trimethyllysine). Ca(2+)-binding residues include D130, D132, D134, H136, and E141.

This sequence belongs to the calmodulin family.

Functionally, calmodulin mediates the control of a large number of enzymes, ion channels and other proteins by Ca(2+). Among the enzymes to be stimulated by the calmodulin-Ca(2+) complex are a number of protein kinases and phosphatases. The protein is Calmodulin of Stylonychia lemnae (Ciliate).